The chain runs to 227 residues: 2-C-methyl-D-erythritol 4-phosphate cytidylyltransferase (227 aa).

The protein belongs to the IspD/TarI cytidylyltransferase family. IspD subfamily.

It carries out the reaction 2-C-methyl-D-erythritol 4-phosphate + CTP + H(+) = 4-CDP-2-C-methyl-D-erythritol + diphosphate. It participates in isoprenoid biosynthesis; isopentenyl diphosphate biosynthesis via DXP pathway; isopentenyl diphosphate from 1-deoxy-D-xylulose 5-phosphate: step 2/6. In terms of biological role, catalyzes the formation of 4-diphosphocytidyl-2-C-methyl-D-erythritol from CTP and 2-C-methyl-D-erythritol 4-phosphate (MEP). The protein is 2-C-methyl-D-erythritol 4-phosphate cytidylyltransferase of Dehalococcoides mccartyi (strain ATCC BAA-2266 / KCTC 15142 / 195) (Dehalococcoides ethenogenes (strain 195)).